The primary structure comprises 246 residues: 23S rRNA (guanosine-2'-O-)-methyltransferase RlmB (246 aa).

3 residues coordinate S-adenosyl-L-methionine: Gly-197, Ile-217, and Leu-226.

The protein belongs to the class IV-like SAM-binding methyltransferase superfamily. RNA methyltransferase TrmH family. RlmB subfamily.

It is found in the cytoplasm. The enzyme catalyses guanosine(2251) in 23S rRNA + S-adenosyl-L-methionine = 2'-O-methylguanosine(2251) in 23S rRNA + S-adenosyl-L-homocysteine + H(+). Functionally, specifically methylates the ribose of guanosine 2251 in 23S rRNA. This Haemophilus influenzae (strain ATCC 51907 / DSM 11121 / KW20 / Rd) protein is 23S rRNA (guanosine-2'-O-)-methyltransferase RlmB.